We begin with the raw amino-acid sequence, 205 residues long: uncharacterized protein (205 aa).

The stretch at 10-75 (QDLLSAVDQQ…AANLMTVMTD (66 aa)) forms a coiled coil. Residues 111 to 138 (PLSNTNNEQTSPPASGKTSETPKKNPTN) are disordered. Residues 112-138 (LSNTNNEQTSPPASGKTSETPKKNPTN) show a composition bias toward polar residues.

Belongs to the asfivirus K205R family.

It localises to the host cytoplasm. In terms of biological role, induces host endoplasmic reticulum stress and consequently activates autophagy and NF-kappa-B signaling pathway. In turn, may induce autophagy-mediated STING1 degradation and innate immune evasion. This is an uncharacterized protein from Ornithodoros (relapsing fever ticks).